Here is a 380-residue protein sequence, read N- to C-terminus: MKYELDKTDGHARRGRLKFERGVVETPAFMPVGTYGTVKGMTPEEVEATGAQILLGNTFHLWLRPGQEIMKLHGDLHDFMQWKGPILTDSGGFQVFSLGAMRKIKEEGVHFRNPINGEKIFLSPEKSMEIQYDLGSDIVMIFDECTPYPSDWDYAKNSMEMSLRWAKRSRQRFDELNNKNALFGIIQGGVYEDLRDISVKGLVEIGFDGYAVGGLAVGEPKEDMHRILEHVCPQIPADKPRYLMGVGKPEDLVEGVRRGIDMFDCVMPTRNARNGHLFVTNGVIKIRNAKHRSDTSTLDEHCDCYTCKNYSRAYLHHLDRCNEILGARLNTIHNLRYYQRLMAEIRQAIDESRFEDFVHEFYERIGKPVPPLNSSASKCD.

Asp-89 serves as the catalytic Proton acceptor. Residues Asp-89–Phe-93, Asp-143, Gln-187, and Gly-214 each bind substrate. The interval Gly-245–Asp-251 is RNA binding. Asp-264 (nucleophile) is an active-site residue. Residues Thr-269–Arg-273 form an RNA binding; important for wobble base 34 recognition region. Cys-302, Cys-304, Cys-307, and His-333 together coordinate Zn(2+).

It belongs to the queuine tRNA-ribosyltransferase family. As to quaternary structure, homodimer. Within each dimer, one monomer is responsible for RNA recognition and catalysis, while the other monomer binds to the replacement base PreQ1. Requires Zn(2+) as cofactor.

It catalyses the reaction 7-aminomethyl-7-carbaguanine + guanosine(34) in tRNA = 7-aminomethyl-7-carbaguanosine(34) in tRNA + guanine. The protein operates within tRNA modification; tRNA-queuosine biosynthesis. In terms of biological role, catalyzes the base-exchange of a guanine (G) residue with the queuine precursor 7-aminomethyl-7-deazaguanine (PreQ1) at position 34 (anticodon wobble position) in tRNAs with GU(N) anticodons (tRNA-Asp, -Asn, -His and -Tyr). Catalysis occurs through a double-displacement mechanism. The nucleophile active site attacks the C1' of nucleotide 34 to detach the guanine base from the RNA, forming a covalent enzyme-RNA intermediate. The proton acceptor active site deprotonates the incoming PreQ1, allowing a nucleophilic attack on the C1' of the ribose to form the product. After dissociation, two additional enzymatic reactions on the tRNA convert PreQ1 to queuine (Q), resulting in the hypermodified nucleoside queuosine (7-(((4,5-cis-dihydroxy-2-cyclopenten-1-yl)amino)methyl)-7-deazaguanosine). The polypeptide is Queuine tRNA-ribosyltransferase (Proteus mirabilis (strain HI4320)).